The following is a 241-amino-acid chain: Geranylgeranylglyceryl phosphate synthase (241 aa).

Positions 19 and 46 each coordinate Mg(2+). Sn-glycerol 1-phosphate-binding positions include 167–173, 198–199, and 220–221; these read YLEAGSG, GG, and GT.

The protein belongs to the GGGP/HepGP synthase family. Group II subfamily. Mg(2+) is required as a cofactor.

It localises to the cytoplasm. The catalysed reaction is sn-glycerol 1-phosphate + (2E,6E,10E)-geranylgeranyl diphosphate = sn-3-O-(geranylgeranyl)glycerol 1-phosphate + diphosphate. Its pathway is membrane lipid metabolism; glycerophospholipid metabolism. Functionally, prenyltransferase that catalyzes the transfer of the geranylgeranyl moiety of geranylgeranyl diphosphate (GGPP) to the C3 hydroxyl of sn-glycerol-1-phosphate (G1P). This reaction is the first ether-bond-formation step in the biosynthesis of archaeal membrane lipids. The protein is Geranylgeranylglyceryl phosphate synthase of Pyrobaculum calidifontis (strain DSM 21063 / JCM 11548 / VA1).